The sequence spans 186 residues: Large ribosomal subunit protein uL10 (186 aa).

Belongs to the universal ribosomal protein uL10 family. In terms of assembly, part of the ribosomal stalk of the 50S ribosomal subunit. The N-terminus interacts with L11 and the large rRNA to form the base of the stalk. The C-terminus forms an elongated spine to which L12 dimers bind in a sequential fashion forming a multimeric L10(L12)X complex.

Functionally, forms part of the ribosomal stalk, playing a central role in the interaction of the ribosome with GTP-bound translation factors. The sequence is that of Large ribosomal subunit protein uL10 (rplJ) from Streptomyces virginiae (Streptomyces cinnamonensis).